Here is a 91-residue protein sequence, read N- to C-terminus: Small ribosomal subunit protein uS19 (91 aa).

Belongs to the universal ribosomal protein uS19 family.

Protein S19 forms a complex with S13 that binds strongly to the 16S ribosomal RNA. In Cupriavidus pinatubonensis (strain JMP 134 / LMG 1197) (Cupriavidus necator (strain JMP 134)), this protein is Small ribosomal subunit protein uS19.